A 184-amino-acid polypeptide reads, in one-letter code: Alpha-tubulin N-acetyltransferase (184 aa).

The N-acetyltransferase domain maps to 1–174; that stretch reads MNIPPEKMHN…NNFVIFAEYF (174 aa). Acetyl-CoA contacts are provided by residues 108 to 121 and 144 to 153; these read FYIQ…GLGL and SYKLQSFLKK.

It belongs to the acetyltransferase ATAT1 family.

It catalyses the reaction L-lysyl-[alpha-tubulin] + acetyl-CoA = N(6)-acetyl-L-lysyl-[alpha-tubulin] + CoA + H(+). In terms of biological role, specifically acetylates 'Lys-40' in alpha-tubulin on the lumenal side of microtubules. Promotes microtubule destabilization and accelerates microtubule dynamics; this activity may be independent of acetylation activity. Acetylates alpha-tubulin with a slow enzymatic rate, due to a catalytic site that is not optimized for acetyl transfer. Enters the microtubule through each end and diffuses quickly throughout the lumen of microtubules. Acetylates only long/old microtubules because of its slow acetylation rate since it does not have time to act on dynamically unstable microtubules before the enzyme is released. The chain is Alpha-tubulin N-acetyltransferase from Plasmodium knowlesi (strain H).